Reading from the N-terminus, the 218-residue chain is Putative glutamine transport system permease protein GlnP (218 aa).

The region spanning 19 to 208 is the ABC transmembrane type-1 domain; that stretch reads TLVTLKYSVI…ILVMLISFIA (190 aa). A run of 4 helical transmembrane segments spans residues 25 to 45, 57 to 79, 86 to 108, and 187 to 207; these read YSVI…ICKV, FYTS…FASP, FSVF…SEVI, and FFPM…ISFI.

The protein belongs to the binding-protein-dependent transport system permease family. HisMQ subfamily.

The protein localises to the cell inner membrane. In terms of biological role, part of the binding-protein-dependent transport system for glutamine; probably responsible for the translocation of the substrate across the membrane. This Rickettsia felis (strain ATCC VR-1525 / URRWXCal2) (Rickettsia azadi) protein is Putative glutamine transport system permease protein GlnP (glnP).